Here is a 434-residue protein sequence, read N- to C-terminus: MREVVTLQVGQCGNQMGAEFWKTLCKEHGISMCGVLQDSRDLGDRKDVFFYQADDNVFVPRAILVDLEPRVISQAPSFFSQESIFLSNEGGGAGNNWGHGYCVGKAMGNDVIDMIQREAEGCDALETFLLLHSIAGGTGSGFGSLLLERIKEEFPKKIVQTYSIFPNNDESSDVVVQPYNSVLTLHRLIENSDCIVVMDNSSLGRYTLDSLRIGTPTFDHINLLISTVMAASTSTIRFPGYMYCTHQSINNCLVPLDPLKFVVPSYTPFVCDEMSRVVRKATCSDVMRRLLLPKTRLAGYEQTKAQSVVSMLNILHGVEDSGEVSRTVMRFLDKGMVNFVPWMPPSFNVALGKCIANETRPSRVSGLSLTNSTGASLILSKISGQFDKLRKQRAFLDIYKRFGVEPEMFDEGKEIVQKALEEYHSAEMAAYPNH.

135-141 (AGGTGSG) lines the GTP pocket.

The protein belongs to the tubulin family.

The protein localises to the cytoplasm. Its subcellular location is the cytoskeleton. It is found in the microtubule organizing center. It localises to the spindle pole body. Functionally, tubulin is the major constituent of microtubules. The gamma chain is found at microtubule organizing centers (MTOC) such as the spindle poles or the centrosome, suggesting that it is involved in the minus-end nucleation of microtubule assembly. This chain is Tubulin gamma chain (TUB4), found in Encephalitozoon cuniculi (strain GB-M1) (Microsporidian parasite).